The sequence spans 224 residues: Germin-like protein 8-12 (224 aa).

The signal sequence occupies residues 1–23 (MASSSLFLLGALLVLASWQAIVA). The cysteines at positions 33 and 48 are disulfide-linked. In terms of domain architecture, Cupin type-1 spans 60 to 213 (FNAAKFDMPR…AFQVEKKLID (154 aa)). Asn78 is a glycosylation site (N-linked (GlcNAc...) asparagine). Residues His111, His113, Glu118, and His158 each contribute to the Mn(2+) site.

Belongs to the germin family. In terms of assembly, oligomer (believed to be a pentamer but probably hexamer).

The protein localises to the secreted. It localises to the extracellular space. The protein resides in the apoplast. In terms of biological role, plays a role in broad-spectrum disease resistance. Probably has no oxalate oxidase activity even if the active site is conserved. This is Germin-like protein 8-12 from Oryza sativa subsp. japonica (Rice).